Consider the following 531-residue polypeptide: Efflux pump terG (531 aa).

The span at 1 to 11 (MSSSTLEGQET) shows a compositional bias: polar residues. Positions 1 to 27 (MSSSTLEGQETASHHSKNSPSRHGDDG) are disordered. 13 helical membrane-spanning segments follow: residues 86–106 (GKLS…ILIG), 117–137 (AIFV…GVSV), 145–165 (ILAR…ALAI), 179–199 (FAWF…FGPL), 207–227 (WIYW…IVAI), 249–269 (IDLL…FAWN), 280–300 (YVYV…YVEL), 319–339 (FVFG…FYVI), 351–371 (IQMA…ALIV), 380–400 (ASSI…LMAL), 402–422 (PVHS…TFAM), 447–467 (SVIM…AGTI), and 488–508 (TLWF…IFLL).

This sequence belongs to the major facilitator superfamily.

The protein localises to the cell membrane. Efflux pump that might be required for efficient secretion of terrein or other secondary metabolies produced by the terrein genne cluster. In Aspergillus terreus (strain NIH 2624 / FGSC A1156), this protein is Efflux pump terG.